Reading from the N-terminus, the 276-residue chain is 2-dehydro-3-deoxyphosphooctonate aldolase (276 aa).

This sequence belongs to the KdsA family.

The protein resides in the cytoplasm. It catalyses the reaction D-arabinose 5-phosphate + phosphoenolpyruvate + H2O = 3-deoxy-alpha-D-manno-2-octulosonate-8-phosphate + phosphate. The protein operates within carbohydrate biosynthesis; 3-deoxy-D-manno-octulosonate biosynthesis; 3-deoxy-D-manno-octulosonate from D-ribulose 5-phosphate: step 2/3. In Stenotrophomonas maltophilia (strain K279a), this protein is 2-dehydro-3-deoxyphosphooctonate aldolase.